The sequence spans 77 residues: U8-lycotoxin-Ls1m (77 aa).

A signal peptide spans 1 to 20; sequence MKLIIFTGLVLFSIVSLIEA. Residues 21-26 constitute a propeptide that is removed on maturation; that stretch reads QAENEK.

It belongs to the neurotoxin 19 (CSTX) family. 08 (U8-Lctx) subfamily. Post-translationally, contains 4 disulfide bonds. As to expression, expressed by the venom gland.

Its subcellular location is the secreted. This is U8-lycotoxin-Ls1m from Lycosa singoriensis (Wolf spider).